The sequence spans 484 residues: Cysteine--tRNA ligase (484 aa).

Zn(2+) is bound at residue Cys27. The short motif at 29-39 (PTTYNYIHLGN) is the 'HIGH' region element. The Zn(2+) site is built by Cys207, His232, and Glu236. The 'KMSKS' region signature appears at 264 to 268 (KMSKS). Lys267 is an ATP binding site.

Belongs to the class-I aminoacyl-tRNA synthetase family. Monomer. Zn(2+) is required as a cofactor.

The protein localises to the cytoplasm. It catalyses the reaction tRNA(Cys) + L-cysteine + ATP = L-cysteinyl-tRNA(Cys) + AMP + diphosphate. This Pelotomaculum thermopropionicum (strain DSM 13744 / JCM 10971 / SI) protein is Cysteine--tRNA ligase.